Here is a 150-residue protein sequence, read N- to C-terminus: Soluble pyridine nucleotide transhydrogenase (150 aa).

It belongs to the class-I pyridine nucleotide-disulfide oxidoreductase family. It depends on FAD as a cofactor.

The protein localises to the cytoplasm. It catalyses the reaction NAD(+) + NADPH = NADH + NADP(+). Conversion of NADPH, generated by peripheral catabolic pathways, to NADH, which can enter the respiratory chain for energy generation. In Pectobacterium carotovorum subsp. carotovorum (Erwinia carotovora subsp. carotovora), this protein is Soluble pyridine nucleotide transhydrogenase (sthA).